The chain runs to 170 residues: Acireductone dioxygenase (170 aa).

Fe(2+)-binding residues include His99, His101, Glu105, and His144. His99, His101, Glu105, and His144 together coordinate Ni(2+).

This sequence belongs to the acireductone dioxygenase (ARD) family. Monomer. Fe(2+) is required as a cofactor. It depends on Ni(2+) as a cofactor.

It carries out the reaction 1,2-dihydroxy-5-(methylsulfanyl)pent-1-en-3-one + O2 = 3-(methylsulfanyl)propanoate + CO + formate + 2 H(+). It catalyses the reaction 1,2-dihydroxy-5-(methylsulfanyl)pent-1-en-3-one + O2 = 4-methylsulfanyl-2-oxobutanoate + formate + 2 H(+). It participates in amino-acid biosynthesis; L-methionine biosynthesis via salvage pathway; L-methionine from S-methyl-5-thio-alpha-D-ribose 1-phosphate: step 5/6. Functionally, catalyzes 2 different reactions between oxygen and the acireductone 1,2-dihydroxy-3-keto-5-methylthiopentene (DHK-MTPene) depending upon the metal bound in the active site. Fe-containing acireductone dioxygenase (Fe-ARD) produces formate and 2-keto-4-methylthiobutyrate (KMTB), the alpha-ketoacid precursor of methionine in the methionine recycle pathway. Ni-containing acireductone dioxygenase (Ni-ARD) produces methylthiopropionate, carbon monoxide and formate, and does not lie on the methionine recycle pathway. This Bacillus cereus (strain ZK / E33L) protein is Acireductone dioxygenase.